A 354-amino-acid polypeptide reads, in one-letter code: MGPVSVLPKPQSISTWEGDLAKMTHLQAGLSPDTIEKARLELNENPDVLHQDIQQVRDMIITRPDIGFLRTDDAFILRFLRARKFHQADAFRLLAQYFQYRQLNLDMFKNFKADDPGIKRALIDGFPGVLENRDHYGRKILLLFAANWDQSRNSFTDILRAILLSLEVLIEDPELQINGFILIIDWSNFSFKQASKLTPSILKLAIEGLQDSFPARFGGVHFVNQPWYIHALYTLIKPFLKDKTRKRIFLHGNNLNSLHQLIHPEFLPSEFGGTLPPYDMGTWARTLLGPDYSDENDYTHTSYNAMYVKHTCSNLERECSPKPMKRSQSVVEAGTLKHEEKGENENTQPLLALD.

The CRAL-TRIO domain maps to 118-279 (IKRALIDGFP…EFGGTLPPYD (162 aa)). The tract at residues 317-354 (RECSPKPMKRSQSVVEAGTLKHEEKGENENTQPLLALD) is disordered. Over residues 335–344 (TLKHEEKGEN) the composition is skewed to basic and acidic residues. Over residues 345–354 (ENTQPLLALD) the composition is skewed to polar residues.

In terms of assembly, forms a complex with clathrin heavy chain and gamma-adaptin. Expressed in brain with no expression detected in non-neuronal tissues (at protein level).

The protein resides in the golgi apparatus. Its subcellular location is the trans-Golgi network membrane. The protein localises to the early endosome membrane. It localises to the cytoplasmic vesicle. It is found in the clathrin-coated vesicle. Required for normal morphology of late endosomes and/or lysosomes in neurons. Binds phosphatidylinositol 3,5-bisphosphate (PtdIns(3,5)P2). In Rattus norvegicus (Rat), this protein is Clavesin-1.